Here is a 370-residue protein sequence, read N- to C-terminus: NSFL1 cofactor p47 (370 aa).

The tract at residues 54–73 is disordered; the sequence is SQATPSSVSRGTAPSDNRVT. Phosphoserine is present on residues S74, S102, and S114. Disordered regions lie at residues 80-116 and 138-157; these read HDQDEEEEEEEGQRFYAGGSERSGQQIVGPPRKKSPN and TKSPGETSKPRPFAGGGYRL. Positions 109 to 115 match the Nuclear localization signal motif; that stretch reads PPRKKSP. Residue S140 is modified to Phosphoserine; by CDK1. The residue at position 167 (Y167) is a Phosphotyrosine. The Nuclear localization signal motif lies at 172–175; that stretch reads RRRH. Phosphoserine occurs at positions 176, 192, and 272. The 66-residue stretch at 179–244 folds into the SEP domain; the sequence is DVHVVLKLWK…MEDHRDEDFV (66 aa). Residues 291–368 form the UBX domain; the sequence is EAEPTTNIQI…NLLNAVIVQR (78 aa).

The protein belongs to the NSFL1C family. Part of a ternary complex containing STX5A, NSFL1C and VCP. NSFL1C forms a homotrimer that binds to one end of a VCP homohexamer. The complex binds to membranes enriched in phosphatidylethanolamine-containing lipids and promotes Golgi membrane fusion. Interaction with VCIP135 leads to dissociation of the complex via ATP hydrolysis by VCP. Binds ubiquitin and mono-ubiquitinated proteins via its N-terminal UBA-like domain when bound to VCP. Post-translationally, phosphorylated during mitosis. Phosphorylation inhibits interaction with Golgi membranes and is required for the fragmentation of the Golgi stacks during mitosis. As to expression, highly expressed in heart, brain, spleen, lung, liver, muscle, kidney and testis.

The protein resides in the nucleus. The protein localises to the golgi apparatus. Its subcellular location is the golgi stack. It is found in the chromosome. It localises to the cytoplasm. The protein resides in the cytoskeleton. The protein localises to the microtubule organizing center. Its subcellular location is the centrosome. Reduces the ATPase activity of VCP. Necessary for the fragmentation of Golgi stacks during mitosis and for VCP-mediated reassembly of Golgi stacks after mitosis. May play a role in VCP-mediated formation of transitional endoplasmic reticulum (tER). Inhibits the activity of CTSL (in vitro). Together with UBXN2B/p37, regulates the centrosomal levels of kinase AURKA/Aurora A during mitotic progression by promoting AURKA removal from centrosomes in prophase. Also, regulates spindle orientation during mitosis. The polypeptide is NSFL1 cofactor p47 (Nsfl1c) (Rattus norvegicus (Rat)).